A 418-amino-acid chain; its full sequence is Cell division protein FtsZ (418 aa).

Residues 27–31 (GGGSN), 114–116 (GTG), E145, K149, and D193 contribute to the GTP site. Positions 386–418 (KNGVKGHTFGVPLPSVNEDLDEPTFLRNRNKGL) are disordered.

Belongs to the FtsZ family. Homodimer. Polymerizes to form a dynamic ring structure in a strictly GTP-dependent manner. Interacts directly with several other division proteins.

It localises to the cytoplasm. Functionally, essential cell division protein that forms a contractile ring structure (Z ring) at the future cell division site. The regulation of the ring assembly controls the timing and the location of cell division. One of the functions of the FtsZ ring is to recruit other cell division proteins to the septum to produce a new cell wall between the dividing cells. Binds GTP and shows GTPase activity. In Treponema pallidum (strain Nichols), this protein is Cell division protein FtsZ.